The primary structure comprises 163 residues: Extracellular giant hemoglobin major globin subunit B2 (163 aa).

The N-terminal stretch at 1–16 (MIALFVLMGLMAAASA) is a signal peptide. In terms of domain architecture, Globin spans 19 to 163 (CCSSEDRANV…RIANGISAGL (145 aa)). The cysteines at positions 20 and 151 are disulfide-linked. Cys-83 is a binding site for hydrogen sulfide. Residue His-114 participates in heme b binding.

The protein belongs to the globin family. As to quaternary structure, the 400 kDa hemoglobin consists of a spherical 24-mer arranged as a double layer of dome-shaped dodecamers. Each dodecamer is composed of the 3-fold trimer of the tetramer A1-A2-B1-B2 having one intra-tetramer (A1-B2) disulfide bond and one inter-tetramer (B1-B2) disulfide bond per tetramer.

It is found in the secreted. Functionally, the extracellular giant hemoglobin is able to bind and transport oxygen and hydrosulfide simultaneously and reversibly at two different sites. The chain is Extracellular giant hemoglobin major globin subunit B2 (ghbB2) from Oligobrachia mashikoi (Beard worm).